A 192-amino-acid polypeptide reads, in one-letter code: Transcriptional activator GvpE (192 aa).

A DNA-binding site is contributed by 140-145 (KRKVYR). The interval 150–181 (EATFDTVEPAVNRLVTFSLVLKALMIDCNARY) is leucine-zipper.

As to quaternary structure, interacts with GvpD, also with c-GvpD from H.salinarum.

The protein localises to the cytoplasm. With respect to regulation, the amount of protein that accumulates is controlled by GvpD; GvpD causes a reduction in the amount of GvpE, preventing accumulation of excessive amounts of gas vesicles. In terms of biological role, plays a regulatory role in gas vesicle synthesis, activates transcription of the gvpA operon, and probably of the gvpD operon. Gas vesicles are hollow, gas filled proteinaceous nanostructures found in some microorganisms. They allow positioning of halobacteria at the optimal depth for growth in the poorly aerated, shallow brine pools of their habitat. Expression of a 9.5 kb mc-vac DNA fragment containing 2 divergently transcribed regions (gvpD-gvpE-gvpF-gvpG-gvpH-gvpI-gvpJ-gvpK-gvpL-gvpM and gvpA-gvpC-gvpN-gvpO) allows H.volcanii to produce gas vesicles. This is Transcriptional activator GvpE from Haloferax mediterranei (strain ATCC 33500 / DSM 1411 / JCM 8866 / NBRC 14739 / NCIMB 2177 / R-4) (Halobacterium mediterranei).